Here is a 513-residue protein sequence, read N- to C-terminus: MADELGTTEREIIAQRLKKAEALRALGVNPFGNGWQPRHLAEELLRHHGDQPAEEIAKAPGDWSLAGRVLAVRSFGKAAFLRVRDRSAELQVWVKKDRVGDQAFEVFKLLDIGDIVGAEGPATRTKTGELTLEARTFTILTKATRPLPEKWHGLTDVEQRYRQRYVDLVVTPGVREAFVKRARIVSGIRRFLDARGYLEVETPTLHKPEEAGGAAARPFETHHNALDLDLKLRIATELHLKRLVVGGLDRVYEIGRIWRNEGIDRRHNPEFTSIEFYQAYATHEDLMRLTEELMHQLAVEVTGGPVVTFQGQAIDLTPPYPRVSMLEVGARALGLAPDDALAGRGLAEALSRAAARENDSEDAWKLEQAAKKTPGEAVALAFEIFGEPQLPKDRPAFVVDFPLETSPLSRRRDADPRLVDRFELFAAGMELANAFSELNDPADQRARFEAQMRAKAAGDEEAMPYDEDFVRALEHGMPPTAGEGIGIDRLAMLFTDSASIRDVILFPLLKSRD.

Residues Glu-423 and Glu-430 each contribute to the Mg(2+) site.

This sequence belongs to the class-II aminoacyl-tRNA synthetase family. In terms of assembly, homodimer. Requires Mg(2+) as cofactor.

The protein localises to the cytoplasm. It carries out the reaction tRNA(Lys) + L-lysine + ATP = L-lysyl-tRNA(Lys) + AMP + diphosphate. In Anaeromyxobacter dehalogenans (strain 2CP-C), this protein is Lysine--tRNA ligase.